Reading from the N-terminus, the 311-residue chain is Meteorin-like protein (311 aa).

The segment covering 1-13 (MRGAARAAWGRAG) has biased composition (low complexity). The segment at 1 to 24 (MRGAARAAWGRAGQPWPRPPAPGP) is disordered. The signal sequence occupies residues 1–45 (MRGAARAAWGRAGQPWPRPPAPGPPPPPLPLLLLLLAGLLGGAGA). 5 disulfide bridges follow: Cys-52–Cys-75, Cys-107–Cys-143, Cys-188–Cys-260, Cys-191–Cys-284, and Cys-201–Cys-306.

The protein belongs to the meteorin family. As to expression, highly expressed in the skeletal muscle, in subcutaneous adipose tissue, epididymal white adipose tissue depots and heart. Also expressed in brown adipose tissues and kidney.

It is found in the secreted. Its function is as follows. Hormone induced following exercise or cold exposure that promotes energy expenditure. Induced either in the skeletal muscle after exercise or in adipose tissue following cold exposure and is present in the circulation. Able to stimulate energy expenditure associated with the browning of the white fat depots and improves glucose tolerance. Does not promote an increase in a thermogenic gene program via direct action on adipocytes, but acts by stimulating several immune cell subtypes to enter the adipose tissue and activate their prothermogenic actions. Stimulates an eosinophil-dependent increase in IL4 expression and promotes alternative activation of adipose tissue macrophages, which are required for the increased expression of the thermogenic and anti-inflammatory gene programs in fat. Required for some cold-induced thermogenic responses, suggesting a role in metabolic adaptations to cold temperatures. The chain is Meteorin-like protein (METRNL) from Homo sapiens (Human).